A 163-amino-acid polypeptide reads, in one-letter code: Seed allergenic protein RAG1 (163 aa).

The N-terminal stretch at 1–27 is a signal peptide; sequence MASNKVVFSVLLLVVLSVLAAAMATMA. Intrachain disulfides connect Cys39-Cys90, Cys53-Cys78, Cys61-Cys122, Cys79-Cys138, and Cys92-Cys150.

This sequence belongs to the cereal trypsin/alpha-amylase inhibitor family. Post-translationally, five disulfide bonds are present.

It localises to the secreted. In terms of biological role, seed storage protein. The polypeptide is Seed allergenic protein RAG1 (RAG1) (Oryza sativa subsp. japonica (Rice)).